A 117-amino-acid polypeptide reads, in one-letter code: Large ribosomal subunit protein eL34 (117 aa).

This sequence belongs to the eukaryotic ribosomal protein eL34 family. Component of the large ribosomal subunit.

Its subcellular location is the cytoplasm. The protein resides in the cytosol. It localises to the endoplasmic reticulum. Component of the large ribosomal subunit. The ribosome is a large ribonucleoprotein complex responsible for the synthesis of proteins in the cell. In Ictalurus punctatus (Channel catfish), this protein is Large ribosomal subunit protein eL34 (rpl34).